A 353-amino-acid chain; its full sequence is Quinolinate synthase (353 aa).

The iminosuccinate site is built by His-47 and Ser-68. [4Fe-4S] cluster is bound at residue Cys-113. Residues 139–141 (YAN) and Ser-156 each bind iminosuccinate. Cys-200 contributes to the [4Fe-4S] cluster binding site. Iminosuccinate-binding positions include 226–228 (HPE) and Thr-243. Cys-297 provides a ligand contact to [4Fe-4S] cluster.

It belongs to the quinolinate synthase family. Type 1 subfamily. It depends on [4Fe-4S] cluster as a cofactor.

The protein resides in the cytoplasm. The enzyme catalyses iminosuccinate + dihydroxyacetone phosphate = quinolinate + phosphate + 2 H2O + H(+). The protein operates within cofactor biosynthesis; NAD(+) biosynthesis; quinolinate from iminoaspartate: step 1/1. Functionally, catalyzes the condensation of iminoaspartate with dihydroxyacetone phosphate to form quinolinate. The polypeptide is Quinolinate synthase (Yersinia pestis bv. Antiqua (strain Antiqua)).